We begin with the raw amino-acid sequence, 113 residues long: Probable protein L3 (113 aa).

The sequence is that of Probable protein L3 from Bos taurus (Bovine).